The chain runs to 144 residues: Small ribosomal subunit protein bS6 (144 aa).

Residues 97–144 (EEGPSAMMRKADRDRERDERGGPREGGFRSERGPRRPREEETTASVEE) form a disordered region. Residues 105-137 (RKADRDRERDERGGPREGGFRSERGPRRPREEE) are compositionally biased toward basic and acidic residues.

This sequence belongs to the bacterial ribosomal protein bS6 family.

In terms of biological role, binds together with bS18 to 16S ribosomal RNA. This chain is Small ribosomal subunit protein bS6, found in Afipia carboxidovorans (strain ATCC 49405 / DSM 1227 / KCTC 32145 / OM5) (Oligotropha carboxidovorans).